The chain runs to 138 residues: Basic phospholipase A2 Sct-N6 (138 aa).

A signal peptide spans Met-1 to Gly-16. 7 disulfide bridges follow: Cys-42–Cys-131, Cys-44–Cys-60, Cys-59–Cys-111, Cys-65–Cys-138, Cys-66–Cys-104, Cys-73–Cys-97, and Cys-91–Cys-102. Tyr-43, Gly-45, and Gly-47 together coordinate Ca(2+). Residue His-63 is part of the active site. Asp-64 is a Ca(2+) binding site. Asp-105 is an active-site residue.

The protein belongs to the phospholipase A2 family. Group II subfamily. D49 sub-subfamily. Requires Ca(2+) as cofactor. As to expression, expressed by the venom gland.

Its subcellular location is the secreted. It catalyses the reaction a 1,2-diacyl-sn-glycero-3-phosphocholine + H2O = a 1-acyl-sn-glycero-3-phosphocholine + a fatty acid + H(+). Functionally, snake venom phospholipase A2 (PLA2) that displays edema-inducing activities, as well as presynaptic neurotoxicity and low myotoxicity. PLA2 catalyzes the calcium-dependent hydrolysis of the 2-acyl groups in 3-sn-phosphoglycerides. This chain is Basic phospholipase A2 Sct-N6, found in Sistrurus tergeminus (Western massasauga).